The chain runs to 175 residues: R-phycoerythrin subunit beta (175 aa).

C82 provides a ligand contact to (2R,3E)-phycoerythrobilin.

It belongs to the phycobiliprotein family. In terms of assembly, homodimer. Contains one covalently linked phycoerythrobilin chromophore.

Its function is as follows. Green-light absorbing phycoerythrin of unknown function. The chain is R-phycoerythrin subunit beta (cpeB) from Prochlorococcus marinus subsp. pastoris (strain CCMP1986 / NIES-2087 / MED4).